The following is a 174-amino-acid chain: Shikimate kinase 2 (174 aa).

12–17 (GAGKTT) contributes to the ATP binding site. Residues Thr-16 and Asp-32 each coordinate Mg(2+). Residues Asp-34, Arg-58, and Gly-79 each contribute to the substrate site. Residues 112-126 (AEDPEEAQRPSLTGK) form an LID domain region. Residue Arg-120 coordinates ATP. Arg-139 provides a ligand contact to substrate. Gln-155 is a binding site for ATP.

It belongs to the shikimate kinase family. AroL subfamily. In terms of assembly, monomer. It depends on Mg(2+) as a cofactor.

It is found in the cytoplasm. The catalysed reaction is shikimate + ATP = 3-phosphoshikimate + ADP + H(+). The protein operates within metabolic intermediate biosynthesis; chorismate biosynthesis; chorismate from D-erythrose 4-phosphate and phosphoenolpyruvate: step 5/7. In terms of biological role, catalyzes the specific phosphorylation of the 3-hydroxyl group of shikimic acid using ATP as a cosubstrate. This is Shikimate kinase 2 from Yersinia pseudotuberculosis serotype IB (strain PB1/+).